The sequence spans 1070 residues: Duffy receptor gamma form (1070 aa).

A signal peptide spans 1 to 21 (MEGKKKRPLFFLLVLLLSHKA). Over 22–1003 (NNVLFERMNG…SYECFTKGSS (982 aa)) the chain is Extracellular. 2 N-linked (GlcNAc...) asparagine glycosylation sites follow: N134 and N179. 2 disulfide bridges follow: C214/C243 and C227/C234. The Cell attachment site motif lies at 279–281 (RGD). Cystine bridges form between C296/C372, C410/C427, C422/C502, and C431/C500. The disordered stretch occupies residues 518-912 (VGSGVESKAP…LNNRKLNRDQ (395 aa)). Positions 526–541 (APSSNPINEAVKSSSG) are enriched in polar residues. 3 stretches are compositionally biased toward basic and acidic residues: residues 544–559 (KVQEDSAHRSVNEGEG), 672–707 (GEVHNGTDTEPKEDGEKADPQKNIEVKGKQDTDDRS), and 714–731 (HTDERASLGETHMEKDTE). A glycan (N-linked (GlcNAc...) asparagine) is linked at N676. The span at 732 to 763 (TTGGSTLTPEQNVSVASDNGNVPGSGNKQNEG) shows a compositional bias: polar residues. A glycan (N-linked (GlcNAc...) asparagine) is linked at N743. The span at 766–776 (ALSGAESLESS) shows a compositional bias: low complexity. An N-linked (GlcNAc...) asparagine glycan is attached at N785. Positions 796–807 (GNEKDFQKHDFM) are enriched in basic and acidic residues. Low complexity predominate over residues 814-863 (DQTSSDHTSSDQTSSDQTSSDQTSSDQTSSDQTSSDQTSSDQTSSDQTID). The segment covering 864-888 (TEGHHRDNVRNPEIKSSEDMSKGDF) has biased composition (basic and acidic residues). A compositionally biased stretch (polar residues) spans 890-906 (RNSNSNELYSHNNLNNR). N936 carries N-linked (GlcNAc...) asparagine glycosylation. The helical transmembrane segment at 1004 to 1025 (TGIVYFATGGAFLIILLLFASW) threads the bilayer. At 1026–1070 (NAASNDYEEEATFDEFEEYCYNIHRTPQMPNDIEHMQQFTPLDYS) the chain is on the cytoplasmic side.

It is found in the membrane. Binds to Neu5Gc-sialylated receptors on macaque erythrocytes. The chain is Duffy receptor gamma form from Plasmodium knowlesi.